Reading from the N-terminus, the 208-residue chain is Guanylate kinase (208 aa).

The Guanylate kinase-like domain occupies 4–182 (GQLYIISAPS…ALEELKSVFR (179 aa)). 11–18 (APSGAGKT) is a binding site for ATP.

The protein belongs to the guanylate kinase family.

The protein resides in the cytoplasm. The enzyme catalyses GMP + ATP = GDP + ADP. In terms of biological role, essential for recycling GMP and indirectly, cGMP. This chain is Guanylate kinase, found in Hahella chejuensis (strain KCTC 2396).